We begin with the raw amino-acid sequence, 328 residues long: Dof zinc finger protein PBF (328 aa).

Residues 33–56 (RDPKQTRAMPQIGGSGERKPRPQL) form a disordered region. A Dof-type zinc finger spans residues 60–114 (LKCPRCDSNNTKFCYYNNYSMSQPRYFCKACRRYWTHGGTLRNVPIGGGCRKNKH). Residues Cys62, Cys65, Cys87, and Cys90 each coordinate Zn(2+). 2 disordered regions span residues 124-144 (TSSSSSATYAPLSPSTNASSS) and 306-328 (WNKHNNNNNNNNNNNNNNNNKGQ).

As to quaternary structure, interacts with the bZIP transcription factor Opaque-2/O2. Seed endosperm.

Its subcellular location is the nucleus. Functionally, transcription factor that binds specifically to a 5'-AA[AG]G-3' consensus core sequence. May enhance the DNA binding of the bZIP transcription factor Opaque-2 to O2 binding site elements. In Zea mays (Maize), this protein is Dof zinc finger protein PBF (PBF).